The sequence spans 504 residues: Anaerobic nitric oxide reductase transcription regulator NorR (504 aa).

D57 is subject to 4-aspartylphosphate. The Sigma-54 factor interaction domain maps to 187-416 (MIGLSPGMTQ…LEHAIHRAVV (230 aa)). Residues 215 to 222 (GETGTGKE) and 278 to 287 (ADNGTLFLDE) each bind ATP. The segment at residues 479-498 (WAACARMLETDVANLHRLAK) is a DNA-binding region (H-T-H motif).

The protein operates within nitrogen metabolism; nitric oxide reduction. Required for the expression of anaerobic nitric oxide (NO) reductase, acts as a transcriptional activator for at least the norVW operon. Activation also requires sigma-54. The polypeptide is Anaerobic nitric oxide reductase transcription regulator NorR (Shigella boydii serotype 4 (strain Sb227)).